The primary structure comprises 513 residues: MMHTFLRRLCVVALCLGYIKASADFDCRRTSQSCVTGTCNDVNGDCDCPTDANGVATHRNADCGLEIAKVVPTALCGPPCLNGGECYEPTVGTYMCMCPEAFYGNKCENPRKKVECSGTEITINYMPIPTFSGDIFILDNRNTPECAFTEANGMYTATFTYQQCGVTTTNDQPNAGDTSYEISAAVRFNANIERATDMKLTAKCVIDGTGQSNLNDNIGTVSVDQRTDLTEETALTEYQPVSFQLQGKNGNPMPVPVNLGDELRIYIPLADTGRYTKLKITELQTNNGMVEQDLVMETLIFNGCLTDIGEALVTGDISSDPAIPAIIINFMAFRLRGSPQVKFDARVQVCEGTDTSCDSVVCPSPPQSVPSNPQNIPPANPQNIPPANPQNIPPANPQISPSSSQRKRRAAPDNEVILHETLTVLDPRSNEKLRLPHNKSDIKSQQNADPQQCLQSTEIMVMVIVLIVAVVLLLVITTCLAVKFMKQRAAQVKIYNPDMPTGNNTVRIPRAAC.

The signal sequence occupies residues 1–21 (MMHTFLRRLCVVALCLGYIKA). Residues 72–108 (PTALCGPPCLNGGECYEPTVGTYMCMCPEAFYGNKCE) enclose the EGF-like domain. 3 cysteine pairs are disulfide-bonded: C76–C86, C80–C96, and C98–C107. A ZP domain is found at 115 to 364 (ECSGTEITIN…TSCDSVVCPS (250 aa)). Positions 356 to 411 (SCDSVVCPSPPQSVPSNPQNIPPANPQNIPPANPQNIPPANPQISPSSSQRKRRAA) are disordered. Pro residues predominate over residues 375–396 (NIPPANPQNIPPANPQNIPPAN). N-linked (GlcNAc...) asparagine glycosylation is found at N438 and N503.

In terms of tissue distribution, component of the acid-insoluble organic matrix of calcified layers of the shell (at protein level).

It localises to the secreted. This Lottia gigantea (Giant owl limpet) protein is EGF-like domain-containing protein 1.